The following is a 426-amino-acid chain: Coiled-coil domain-containing protein 86 (426 aa).

The segment at 1–426 (MDTPLRRSRR…QPPQRPVAKV (426 aa)) is disordered. At Ser-18 the chain carries Phosphoserine. Residues 33 to 49 (ALVDFKSNSEETGELKS) show a composition bias toward basic and acidic residues. Pro residues predominate over residues 55 to 145 (LSLPSPGPQP…SLPSPGPQPE (91 aa)). Phosphoserine is present on Ser-59. Thr-66 bears the Phosphothreonine mark. A phosphoserine mark is found at Ser-67, Ser-70, Ser-161, Ser-172, Ser-183, Ser-191, Ser-194, Ser-225, Ser-252, Ser-253, and Ser-283. Polar residues predominate over residues 241–255 (QPAQELTVQAPSSPE). Residues 304 to 320 (GKPKSGRVWKDRSKKRF) are compositionally biased toward basic residues. A compositionally biased stretch (basic and acidic residues) spans 339-383 (ERQERKLAKDFARHLEEEKQRRRQEKKERRAENLRRRLENERKAE). The stretch at 346–389 (AKDFARHLEEEKQRRRQEKKERRAENLRRRLENERKAEIVQVIR) forms a coiled coil. Residues 392 to 402 (AKLKKAKKKQL) show a composition bias toward basic residues. Position 408 is a citrulline (Arg-408).

Citrullinated by PADI4. Highly expressed in testis. Also expressed in heart, liver, kidney.

The protein localises to the nucleus. The protein resides in the chromosome. It is found in the nucleolus. Functionally, required for proper chromosome segregation during mitosis and error-free mitotic progression. The chain is Coiled-coil domain-containing protein 86 from Mus musculus (Mouse).